Here is a 333-residue protein sequence, read N- to C-terminus: Mitochondrial 2-oxoglutarate/malate carrier protein (333 aa).

Solcar repeat units follow at residues 29–127 (FRLI…LFER), 136–227 (PGFL…SKQF), and 236–325 (DNIL…MNKA). 6 consecutive transmembrane segments (helical) span residues 30–61 (RLIA…VQPL), 102–120 (GLSA…RLGI), 138–159 (FLLK…GTPA), 202–221 (GCIP…LASY), 241–259 (HFCA…SMPV), and 300–319 (GFTP…FIFL).

Belongs to the mitochondrial carrier (TC 2.A.29) family. As to quaternary structure, interacts with SMIM26.

Its subcellular location is the membrane. It carries out the reaction (S)-malate(in) + 2-oxoglutarate(out) = (S)-malate(out) + 2-oxoglutarate(in). It catalyses the reaction malonate(in) + 2-oxoglutarate(out) = malonate(out) + 2-oxoglutarate(in). The enzyme catalyses succinate(in) + 2-oxoglutarate(out) = succinate(out) + 2-oxoglutarate(in). The catalysed reaction is maleate(in) + 2-oxoglutarate(out) = maleate(out) + 2-oxoglutarate(in). It carries out the reaction oxaloacetate(in) + 2-oxoglutarate(out) = oxaloacetate(out) + 2-oxoglutarate(in). Its function is as follows. Catalyzes the transport of 2-oxoglutarate (alpha-oxoglutarate) across the inner mitochondrial membrane in an electroneutral exchange for malate. Can also exchange 2-oxoglutarate for other dicarboxylic acids such as malonate, succinate, maleate and oxaloacetate, although with lower affinity. Contributes to several metabolic processes, including the malate-aspartate shuttle, the oxoglutarate/isocitrate shuttle, in gluconeogenesis from lactate, and in nitrogen metabolism. Maintains mitochondrial fusion and fission events, and the organization and morphology of cristae. Involved in the regulation of apoptosis. Helps protect from cytotoxic-induced apoptosis by modulating glutathione levels in mitochondria. This is Mitochondrial 2-oxoglutarate/malate carrier protein (SLC25A11) from Sus scrofa (Pig).